The following is a 1001-amino-acid chain: Ankyrin repeat domain-containing protein 35 (1001 aa).

ANK repeat units lie at residues 53–82, 86–115, 119–148, 152–181, 185–214, and 218–247; these read NGQS…DINS, DGST…NEDA, ENRS…FLDV, DGRT…RVNV, NDKS…DAGA, and TGHD…RRRR. Disordered regions lie at residues 256–296, 352–482, and 559–601; these read PDLA…PCSE, PRAS…VAEP, and PEVP…ALGG. Residues 281–295 are compositionally biased toward acidic residues; the sequence is PEEEQEEKEDEDPCS. The stretch at 295-344 forms a coiled coil; the sequence is SEEWRWKYEEERRKVVRLEQELVQKTEECKTQAAAYLDLENQIREQAQEL. Basic and acidic residues predominate over residues 402 to 422; that stretch reads KKAEDSAPGKIQYEVHGRSQP. Positions 423–434 are enriched in low complexity; it reads EEQGPPQSPASE. Residues 440 to 450 show a composition bias toward polar residues; sequence TGQQLTTNGAQ. Residues 579-588 are compositionally biased toward basic and acidic residues; sequence KQDEEKEKRV. Coiled-coil stretches lie at residues 610–696, 733–810, and 851–968; these read KGQL…LLAS, ISTL…IGKL, and QELK…HEEI. The interval 879-902 is disordered; that stretch reads RRSGDLAAQAAEQERQASEMRGRS. Residues 890–902 show a composition bias toward basic and acidic residues; that stretch reads EQERQASEMRGRS.

The polypeptide is Ankyrin repeat domain-containing protein 35 (ANKRD35) (Homo sapiens (Human)).